The sequence spans 347 residues: Phenylalanine--tRNA ligase alpha subunit (347 aa).

Glutamate 261 provides a ligand contact to Mg(2+).

This sequence belongs to the class-II aminoacyl-tRNA synthetase family. Phe-tRNA synthetase alpha subunit type 1 subfamily. In terms of assembly, tetramer of two alpha and two beta subunits. Mg(2+) serves as cofactor.

The protein localises to the cytoplasm. It carries out the reaction tRNA(Phe) + L-phenylalanine + ATP = L-phenylalanyl-tRNA(Phe) + AMP + diphosphate + H(+). The polypeptide is Phenylalanine--tRNA ligase alpha subunit (Streptococcus thermophilus (strain CNRZ 1066)).